The following is a 307-amino-acid chain: MVRTEVEIGRGLTIKNPVMTASGTYGYGTEYKDFIDIDRLGAIVVKGTTLHHREGNAYPRMAETPSGMLNAVGLQNKGVHYFVEHIYPVIKDYRTEMIVNVSGSTLDDYAETSRIINELEHIRAIELNISCPNVKQGGMAYGVTCEGAASVVKAVRRAYDKTLIVKLSPNVTDITEIARAVESEGADAISMVNTFLGMAIDAEKRRPILSTTTGGLSGPCIKPIALRMVWQTAKVVQVPIIGMGGIASAADAIEFLLAGATAVQVGCYNFVDPAAASYIVDGIEDYLRRHGISDVKELIGSLVIEHN.

FMN contacts are provided by residues Ser22 and 46 to 47 (KG). Residues Lys46 and 70–74 (NAVGL) each bind substrate. The FMN site is built by Asn100 and Asn128. Residue Asn128 participates in substrate binding. Cys131 functions as the Nucleophile in the catalytic mechanism. FMN contacts are provided by Lys166 and Val192. Residue 193-194 (NT) participates in substrate binding. Residues Gly218 and 244–245 (GG) each bind FMN.

Belongs to the dihydroorotate dehydrogenase family. Type 1 subfamily. Heterotetramer of 2 PyrK and 2 PyrD type B subunits. FMN serves as cofactor.

It is found in the cytoplasm. It catalyses the reaction (S)-dihydroorotate + NAD(+) = orotate + NADH + H(+). It functions in the pathway pyrimidine metabolism; UMP biosynthesis via de novo pathway; orotate from (S)-dihydroorotate (NAD(+) route): step 1/1. In terms of biological role, catalyzes the conversion of dihydroorotate to orotate with NAD(+) as electron acceptor. This Porphyromonas gingivalis (strain ATCC BAA-308 / W83) protein is Dihydroorotate dehydrogenase B (NAD(+)), catalytic subunit (pyrD).